Reading from the N-terminus, the 440-residue chain is Probable carboxypeptidase AFUB_072730 (440 aa).

A signal peptide spans 1-16; sequence MKPLTSLLLSAALSAA. Asn87 and Asn149 each carry an N-linked (GlcNAc...) asparagine glycan. Zn(2+) is bound at residue Asp165. The active-site Proton acceptor is Glu197. Glu198 contacts Zn(2+). 2 N-linked (GlcNAc...) asparagine glycosylation sites follow: Asn353 and Asn372.

It belongs to the peptidase M20A family. Zn(2+) is required as a cofactor.

Its subcellular location is the secreted. This is Probable carboxypeptidase AFUB_072730 from Aspergillus fumigatus (strain CBS 144.89 / FGSC A1163 / CEA10) (Neosartorya fumigata).